The chain runs to 275 residues: Protein MGF 110-11L (275 aa).

The chain crosses the membrane as a helical span at residues 5 to 25; sequence LGLLLGYSVLILTHELPDLSA. An N-linked (GlcNAc...) asparagine; by host glycan is attached at N61. 2 consecutive transmembrane segments (helical) span residues 127–147 and 149–169; these read HCCF…FAYH and NLHL…IWLS.

It belongs to the asfivirus MGF 110 family.

The protein resides in the host membrane. Functionally, plays a role in virus cell tropism, and may be required for efficient virus replication in macrophages. The polypeptide is Protein MGF 110-11L (African swine fever virus (isolate Pig/Kenya/KEN-50/1950) (ASFV)).